The sequence spans 637 residues: Biosynthetic arginine decarboxylase (637 aa).

Lysine 101 carries the post-translational modification N6-(pyridoxal phosphate)lysine. 286–296 (FDVGGGLAVDY) provides a ligand contact to substrate.

It belongs to the Orn/Lys/Arg decarboxylase class-II family. SpeA subfamily. Requires Mg(2+) as cofactor. The cofactor is pyridoxal 5'-phosphate.

It carries out the reaction L-arginine + H(+) = agmatine + CO2. The protein operates within amine and polyamine biosynthesis; agmatine biosynthesis; agmatine from L-arginine: step 1/1. In terms of biological role, catalyzes the biosynthesis of agmatine from arginine. This is Biosynthetic arginine decarboxylase from Shewanella baltica (strain OS195).